The chain runs to 141 residues: ATP synthase epsilon chain (141 aa).

This sequence belongs to the ATPase epsilon chain family. In terms of assembly, F-type ATPases have 2 components, CF(1) - the catalytic core - and CF(0) - the membrane proton channel. CF(1) has five subunits: alpha(3), beta(3), gamma(1), delta(1), epsilon(1). CF(0) has three main subunits: a, b and c.

The protein localises to the cell inner membrane. In terms of biological role, produces ATP from ADP in the presence of a proton gradient across the membrane. The polypeptide is ATP synthase epsilon chain (Gluconacetobacter diazotrophicus (strain ATCC 49037 / DSM 5601 / CCUG 37298 / CIP 103539 / LMG 7603 / PAl5)).